Consider the following 372-residue polypeptide: GDSL esterase/lipase At5g45910 (372 aa).

The first 19 residues, 1–19 (MRINMLFIVAFSFLVSVRS), serve as a signal peptide directing secretion. Residue serine 37 is the Nucleophile of the active site. N-linked (GlcNAc...) asparagine glycosylation is found at asparagine 66, asparagine 101, and asparagine 137. Catalysis depends on residues aspartate 345 and histidine 348.

This sequence belongs to the 'GDSL' lipolytic enzyme family.

The protein localises to the secreted. This Arabidopsis thaliana (Mouse-ear cress) protein is GDSL esterase/lipase At5g45910.